The sequence spans 1744 residues: Complement C4-B (1744 aa).

The first 19 residues, 1–19, serve as a signal peptide directing secretion; sequence MRLLWGLIWASSFFTLSLQ. A disulfide bond links Cys68 and Cys97. Asn226 carries N-linked (GlcNAc...) asparagine glycosylation. Cys635 and Cys669 are joined by a disulfide. A propeptide spanning residues 676 to 679 is cleaved from the precursor; the sequence is RKKR. Disulfide bonds link Cys702–Cys728, Cys703–Cys735, and Cys716–Cys736. Residues 702–736 enclose the Anaphylatoxin-like domain; that stretch reads CCQDGVTRLPMMRSCEQRAARVQQPDCREPFLSCC. Asn862 carries N-linked (GlcNAc...) asparagine glycosylation. Ser918 is modified (phosphoserine). The isoglutamyl cysteine thioester (Cys-Gln) cross-link spans 1010–1013; that stretch reads CGEQ. Asn1328 and Asn1391 each carry an N-linked (GlcNAc...) asparagine glycan. 3 positions are modified to sulfotyrosine: Tyr1417, Tyr1420, and Tyr1422. Positions 1447-1453 are excised as a propeptide; sequence RRNRRRR. 5 disulfides stabilise this stretch: Cys1471/Cys1535, Cys1583/Cys1588, Cys1595/Cys1673, Cys1618/Cys1742, and Cys1718/Cys1727. Positions 1595-1742 constitute an NTR domain; sequence CPRQRRALER…FLQEYGTQGC (148 aa).

In absence of complement activation, circulates in blood as a disulfide-linked trimer of an alpha, beta and gamma chain. As to quaternary structure, complement C4b is composed of complement C4b-A, complement C4 beta and complement C4 gamma chains that are associated via disulfide bonds. Non-enzymatic component of the C3 convertase, also named C4bC2b, composed of the serine protease complement C2b (C2), as well as complement C4b. Non-enzymatic component of the C5 convertase, also named C4bC2bC3b, composed of the serine protease complement C2b (C2), complement C3b, as well as complement C4b. Interacts with CR1 (via Sushi 1 and Sushi 2 domains). In terms of assembly, (Microbial infection) Binds B.burgdorferi OspC, the interaction is inhibited by complement factor C2. This binding may inhibit the complement cascade and allow the bacteria to survive in the host bloodstream. Post-translationally, prior to secretion, the single-chain precursor is enzymatically cleaved by plasminogen (PLG) to yield non-identical chains alpha, beta and gamma. During activation of the complement systems, the alpha chain is cleaved into C4a and C4b by different proteases depending on the complement pathway: C4b stays linked to the beta and gamma chains, while C4a is released in the plasma. The alpha chain is cleaved by C1S to generate C4a and C4b following activation by the classical complement system. The alpha chain is cleaved to generate C4a and C4b by MASP2 following activation by the lectin complement system. The alpha chain is cleaved by GZMK to generate C4a and C4b following activation by the GZMK complement system. Further degradation of C4b by C1 into the inactive fragments C4c and C4d blocks the generation of C3 convertase. The proteolytic cleavages often are incomplete so that many structural forms can be found in plasma. Upon activation, the internal thioester bond reacts with carbohydrate antigens on the target surface to form amide or ester bonds, leading to covalent association with the surface of pathogens. In terms of processing, complement C4b interacts with complement C3b via a thioester linkage. Post-translationally, N- and O-glycosylated. O-glycosylated with a core 1 or possibly core 8 glycan. Complement component C4 is expressed at highest levels in the liver, at moderate levels in the adrenal cortex, adrenal medulla, thyroid gland, and the kidney, and at lowest levels in the heart, ovary, small intestine, thymus, pancreas and spleen. The extra-hepatic sites of expression may be important for the local protection and inflammatory response.

It localises to the secreted. Its subcellular location is the synapse. It is found in the cell projection. The protein localises to the axon. The protein resides in the dendrite. It localises to the cell surface. Its function is as follows. Precursor of non-enzymatic components of the classical, lectin and GZMK complement pathways, which consist in a cascade of proteins that leads to phagocytosis and breakdown of pathogens and signaling that strengthens the adaptive immune system. Non-enzymatic component of C3 and C5 convertases. Generated following cleavage by complement proteases (C1S, MASP2 or GZMK, depending on the complement pathway), it covalently attaches to the surface of pathogens, where it acts as an opsonin that marks the surface of antigens for removal. It then recruits the serine protease complement C2b to form the C3 and C5 convertases, which cleave and activate C3 and C5, respectively, the next components of the complement pathways. Complement C4b-B isotype catalyzes the transacylation of the thioester carbonyl group to form ester bonds with carbohydrate antigens, while C4b-A isotype is responsible for effective binding to form amide bonds with immune aggregates or protein antigens. In terms of biological role, putative humoral mediator released following cleavage by complement proteases (C1S, MASP2 or GZMK, depending on the complement pathway). While it is strongly similar to anaphylatoxins, its role is unclear. Was reported to act as a mediator of local inflammatory process; however these effects were probably due to contamination with C3a and/C5a anaphylatoxins in biological assays. This chain is Complement C4-B, found in Homo sapiens (Human).